The primary structure comprises 358 residues: Peptide chain release factor 1 (358 aa).

Gln233 carries the post-translational modification N5-methylglutamine.

The protein belongs to the prokaryotic/mitochondrial release factor family. Post-translationally, methylated by PrmC. Methylation increases the termination efficiency of RF1.

It is found in the cytoplasm. Peptide chain release factor 1 directs the termination of translation in response to the peptide chain termination codons UAG and UAA. The protein is Peptide chain release factor 1 of Lysinibacillus sphaericus (strain C3-41).